Reading from the N-terminus, the 176-residue chain is Woronin body major protein (176 aa).

A propeptide spanning residues 1 to 16 (MGYYDDDAHGHVEADA) is cleaved from the precursor. A compositionally biased stretch (basic and acidic residues) spans 1–16 (MGYYDDDAHGHVEADA). Residues 1–31 (MGYYDDDAHGHVEADAAPRATTGTGTGSASQ) form a disordered region. Residues 174-176 (SRL) carry the Microbody targeting signal motif.

This sequence belongs to the eIF-5A family. Hex1 subfamily. As to quaternary structure, forms oligomers. Self-assembles into hexagonal rods.

The protein localises to the cell septum. In terms of biological role, major component of Woronin bodies, fungal-specific organelles that occlude septal pores in order to separate intact from damaged compartments. Hex-1 binds directly or indirectly to the Woronin body tether that in turn is anchored at the rim of the septal pore. In Neurospora crassa (strain ATCC 24698 / 74-OR23-1A / CBS 708.71 / DSM 1257 / FGSC 987), this protein is Woronin body major protein.